A 269-amino-acid polypeptide reads, in one-letter code: Energy-coupling factor transporter ATP-binding protein EcfA1 (269 aa).

Positions 8 to 242 (IEFKDVSFQY…EEALISVGLD (235 aa)) constitute an ABC transporter domain. 42–49 (GHNGSGKS) is an ATP binding site.

Belongs to the ABC transporter superfamily. Energy-coupling factor EcfA family. Forms a stable energy-coupling factor (ECF) transporter complex composed of 2 membrane-embedded substrate-binding proteins (S component), 2 ATP-binding proteins (A component) and 2 transmembrane proteins (T component).

The protein localises to the cell membrane. Its function is as follows. ATP-binding (A) component of a common energy-coupling factor (ECF) ABC-transporter complex. Unlike classic ABC transporters this ECF transporter provides the energy necessary to transport a number of different substrates. This Staphylococcus epidermidis (strain ATCC 35984 / DSM 28319 / BCRC 17069 / CCUG 31568 / BM 3577 / RP62A) protein is Energy-coupling factor transporter ATP-binding protein EcfA1.